Reading from the N-terminus, the 347-residue chain is Quinolinate synthase (347 aa).

Iminosuccinate is bound by residues His47 and Ser68. Cys113 serves as a coordination point for [4Fe-4S] cluster. Iminosuccinate-binding positions include 139-141 and Ser156; that span reads YAN. Cys200 contacts [4Fe-4S] cluster. Iminosuccinate contacts are provided by residues 226–228 and Thr243; that span reads HPE. Cys297 contributes to the [4Fe-4S] cluster binding site.

It belongs to the quinolinate synthase family. Type 1 subfamily. [4Fe-4S] cluster serves as cofactor.

It localises to the cytoplasm. The catalysed reaction is iminosuccinate + dihydroxyacetone phosphate = quinolinate + phosphate + 2 H2O + H(+). The protein operates within cofactor biosynthesis; NAD(+) biosynthesis; quinolinate from iminoaspartate: step 1/1. Its function is as follows. Catalyzes the condensation of iminoaspartate with dihydroxyacetone phosphate to form quinolinate. The chain is Quinolinate synthase from Escherichia coli O9:H4 (strain HS).